Here is a 363-residue protein sequence, read N- to C-terminus: UDP-N-acetylglucosamine--N-acetylmuramyl-(pentapeptide) pyrophosphoryl-undecaprenol N-acetylglucosamine transferase (363 aa).

Residues T10–G12, N124, S195, and Q295 contribute to the UDP-N-acetyl-alpha-D-glucosamine site.

The protein belongs to the glycosyltransferase 28 family. MurG subfamily.

Its subcellular location is the cell membrane. The catalysed reaction is di-trans,octa-cis-undecaprenyl diphospho-N-acetyl-alpha-D-muramoyl-L-alanyl-D-glutamyl-meso-2,6-diaminopimeloyl-D-alanyl-D-alanine + UDP-N-acetyl-alpha-D-glucosamine = di-trans,octa-cis-undecaprenyl diphospho-[N-acetyl-alpha-D-glucosaminyl-(1-&gt;4)]-N-acetyl-alpha-D-muramoyl-L-alanyl-D-glutamyl-meso-2,6-diaminopimeloyl-D-alanyl-D-alanine + UDP + H(+). It participates in cell wall biogenesis; peptidoglycan biosynthesis. Its function is as follows. Cell wall formation. Catalyzes the transfer of a GlcNAc subunit on undecaprenyl-pyrophosphoryl-MurNAc-pentapeptide (lipid intermediate I) to form undecaprenyl-pyrophosphoryl-MurNAc-(pentapeptide)GlcNAc (lipid intermediate II). The sequence is that of UDP-N-acetylglucosamine--N-acetylmuramyl-(pentapeptide) pyrophosphoryl-undecaprenol N-acetylglucosamine transferase from Bacillus subtilis (strain 168).